A 989-amino-acid chain; its full sequence is Phosphoenolpyruvate carboxylase (989 aa).

Residues His175 and Lys630 contribute to the active site.

The protein belongs to the PEPCase type 1 family. It depends on Mg(2+) as a cofactor.

The catalysed reaction is oxaloacetate + phosphate = phosphoenolpyruvate + hydrogencarbonate. In terms of biological role, forms oxaloacetate, a four-carbon dicarboxylic acid source for the tricarboxylic acid cycle. This Prochlorococcus marinus (strain MIT 9215) protein is Phosphoenolpyruvate carboxylase.